The primary structure comprises 728 residues: 1,4-alpha-glucan branching enzyme GlgB (728 aa).

Aspartate 405 acts as the Nucleophile in catalysis. Catalysis depends on glutamate 458, which acts as the Proton donor.

It belongs to the glycosyl hydrolase 13 family. GlgB subfamily. As to quaternary structure, monomer.

It catalyses the reaction Transfers a segment of a (1-&gt;4)-alpha-D-glucan chain to a primary hydroxy group in a similar glucan chain.. The protein operates within glycan biosynthesis; glycogen biosynthesis. Catalyzes the formation of the alpha-1,6-glucosidic linkages in glycogen by scission of a 1,4-alpha-linked oligosaccharide from growing alpha-1,4-glucan chains and the subsequent attachment of the oligosaccharide to the alpha-1,6 position. The protein is 1,4-alpha-glucan branching enzyme GlgB of Escherichia coli O6:H1 (strain CFT073 / ATCC 700928 / UPEC).